We begin with the raw amino-acid sequence, 198 residues long: MSNISDIILASSSQTRKALMDRLGLTYRIISPDIDESPQGETHADDLAQRLAFEKARVVSAQYPNSIVIGSDQVAWRIDLPKQFIGKPLTIENAMAQLKQNSGQTLCFSTGLSIQHLASGFEHTLIEHYQVKFRVLTDAEIERYVTTEQPLQCAGSFRCEGLGISLFESMQGSDQTTLMGLPLITLCKYLRQLNIQLP.

The active-site Proton acceptor is D72.

This sequence belongs to the Maf family. Requires a divalent metal cation as cofactor.

The protein resides in the cytoplasm. The catalysed reaction is a ribonucleoside 5'-triphosphate + H2O = a ribonucleoside 5'-phosphate + diphosphate + H(+). It catalyses the reaction a 2'-deoxyribonucleoside 5'-triphosphate + H2O = a 2'-deoxyribonucleoside 5'-phosphate + diphosphate + H(+). In terms of biological role, nucleoside triphosphate pyrophosphatase. May have a dual role in cell division arrest and in preventing the incorporation of modified nucleotides into cellular nucleic acids. In Acinetobacter baylyi (strain ATCC 33305 / BD413 / ADP1), this protein is Nucleoside triphosphate pyrophosphatase.